The chain runs to 410 residues: Translation initiation factor 2 subunit gamma (410 aa).

A tr-type G domain is found at 9 to 202 (QAEVNIGMVG…AIEEFIPTPE (194 aa)). The tract at residues 18 to 25 (GHVDHGKT) is G1. Mg(2+) is bound by residues Asp21, Thr25, Gly46, and Thr48. Residue 21–26 (DHGKTT) participates in GTP binding. The segment at 46-50 (GITIK) is G2. Zn(2+)-binding residues include Cys61, Cys64, Cys73, and Cys76. Residues 90-93 (DAPG) form a G3 region. GTP is bound by residues 145–148 (NKIE) and 180–182 (SAL). The segment at 145–148 (NKIE) is G4. The segment at 180 to 182 (SAL) is G5.

The protein belongs to the TRAFAC class translation factor GTPase superfamily. Classic translation factor GTPase family. EIF2G subfamily. In terms of assembly, heterotrimer composed of an alpha, a beta and a gamma chain. It depends on Mg(2+) as a cofactor.

The catalysed reaction is GTP + H2O = GDP + phosphate + H(+). In terms of biological role, eIF-2 functions in the early steps of protein synthesis by forming a ternary complex with GTP and initiator tRNA. The polypeptide is Translation initiation factor 2 subunit gamma (Thermococcus onnurineus (strain NA1)).